The primary structure comprises 247 residues: Anionic trypsin (247 aa).

A signal peptide spans 1–15 (MHPLLILAFVGAAVA). The propeptide at 16–23 (FPSDDDDK) is activation peptide. The region spanning 24-244 (IVGGYTCAEN…YVDWIQETIA (221 aa)) is the Peptidase S1 domain. 6 disulfides stabilise this stretch: cysteine 30-cysteine 160, cysteine 48-cysteine 64, cysteine 132-cysteine 233, cysteine 139-cysteine 206, cysteine 171-cysteine 185, and cysteine 196-cysteine 220. Catalysis depends on histidine 63, which acts as the Charge relay system. Residues glutamate 75, asparagine 77, valine 80, and glutamate 85 each contribute to the Ca(2+) site. The active-site Charge relay system is the aspartate 107. Serine 200 functions as the Charge relay system in the catalytic mechanism.

The protein belongs to the peptidase S1 family. Ca(2+) serves as cofactor. Not sulfated on tyrosine residue(s).

The protein resides in the secreted. It localises to the extracellular space. The catalysed reaction is Preferential cleavage: Arg-|-Xaa, Lys-|-Xaa.. The protein is Anionic trypsin of Bos taurus (Bovine).